The sequence spans 1976 residues: Myosin-10 (1976 aa).

The residue at position 18 (Arg18) is an Omega-N-methylarginine. A Myosin N-terminal SH3-like domain is found at 31–81 (TAKKLVWIPSERHGFEAASIKEERGDEVMVELAENGKKAMVNKDDIQKMNP). In terms of domain architecture, Myosin motor spans 85 to 783 (SKVEDMAELT…VLAHLEEERD (699 aa)). Residue 178 to 185 (GESGAGKT) participates in ATP binding. The residue at position 442 (Lys442) is an N6-acetyllysine. Positions 661–683 (LTKLMATLRNTNPNFVRCIIPNH) are actin-binding. An IQ domain is found at 786-815 (ITDIIIFFQAVCRGYLARKAFAKKQQQLSA). Positions 845–1976 (LQVTRQEEEL…VNETQPPQSE (1132 aa)) form a coiled coil. A disordered region spans residues 1125–1175 (EDFESEKASRNKAEKQKRDLSEELEALKTELEDTLDTTAAQQELRTKREQE). Over residues 1129 to 1155 (SEKASRNKAEKQKRDLSEELEALKTEL) the composition is skewed to basic and acidic residues. Ser1145 bears the Phosphoserine mark. 3 positions are modified to N6-acetyllysine: Lys1241, Lys1301, and Lys1645. 2 disordered regions span residues 1697–1718 (ASSE…DEIA) and 1874–1976 (KANA…PQSE). Basic and acidic residues predominate over residues 1698–1708 (SSERARRHAEQ). Omega-N-methylarginine is present on Arg1930. A phosphoserine mark is found at Ser1935, Ser1937, Ser1938, and Ser1939. Arg1940 is subject to Omega-N-methylarginine. A phosphoserine mark is found at Ser1952 and Ser1956. Thr1960 is modified (phosphothreonine). Residues 1967–1976 (VNETQPPQSE) show a composition bias toward polar residues. Ser1975 bears the Phosphoserine mark.

The protein belongs to the TRAFAC class myosin-kinesin ATPase superfamily. Myosin family. As to quaternary structure, myosin is a hexameric protein that consists of 2 heavy chain subunits (MHC), 2 alkali light chain subunits (MLC) and 2 regulatory light chain subunits (MLC-2). Interacts with PLEKHG6. Interacts with ECPAS. Interacts with KIF26B. Interacts with LARP6. Interacts with MCC. Interacts with CFAP95. Phosphorylated by ABL2.

The protein resides in the cell projection. Its subcellular location is the lamellipodium. Functionally, involved with LARP6 in the stabilization of type I collagen mRNAs for CO1A1 and CO1A2. During cell spreading, plays an important role in cytoskeleton reorganization, focal contacts formation (in the central part but not the margins of spreading cells), and lamellipodial extension; this function is mechanically antagonized by MYH9. Cellular myosin that appears to play a role in cytokinesis, cell shape, and specialized functions such as secretion and capping. The sequence is that of Myosin-10 (Myh10) from Rattus norvegicus (Rat).